The primary structure comprises 69 residues: UPF0337 protein XAC4007 (69 aa).

It belongs to the UPF0337 (CsbD) family.

The polypeptide is UPF0337 protein XAC4007 (Xanthomonas axonopodis pv. citri (strain 306)).